Here is a 252-residue protein sequence, read N- to C-terminus: Protein UL24 homolog (252 aa).

The segment at 215–252 is disordered; it reads SVLTKTSGENRSRASRQVAKNAPKNRIRRTAKKDAKRQ. Residues 237–252 show a composition bias toward basic residues; it reads PKNRIRRTAKKDAKRQ.

This sequence belongs to the herpesviridae UL24 family.

The protein localises to the virion. Its subcellular location is the host cytoplasm. The protein resides in the host nucleus. It is found in the host nucleolus. It localises to the host Golgi apparatus. Functionally, may participate in nuclear egress of viral particles. Plays a role in the dispersal of several host nucleolar proteins including NCL/nucleolin and NPM1. Since deletion of host NCL/nucleolin negatively impact on nuclear egress, UL24 supposedly acts on this process through its effect on host nucleoli. The sequence is that of Protein UL24 homolog (U49) from Homo sapiens (Human).